We begin with the raw amino-acid sequence, 74 residues long: Protein F9 homolog (74 aa).

At glycine 1 to proline 34 the chain is on the virion surface side. A helical transmembrane segment spans residues tryptophan 35 to leucine 55. Topologically, residues arginine 56 to arginine 73 are intravirion.

It belongs to the chordopoxvirinae L1 protein family.

The protein resides in the virion membrane. The protein is Protein F9 homolog of Capra hircus (Goat).